We begin with the raw amino-acid sequence, 1130 residues long: MRCLAPRPAGSYLSEPQGSSQCATMELGPLEGGYLELLNSDADPLCLYHFYDQMDLAGEEEIELYSEPDTDTINCDQFSRLLCDMEGDEETREAYANIAELDQYVFQDSQLEGLSKDIFKHIGPDEVIGESMEMPAEVGQKSQKRPFPEELPADLKHWKPAEPPTVVTGSLLVGPVSDCSTLPCLPLPALFNQEPASGQMRLEKTDQIPMPFSSSSLSCLNLPEGPIQFVPTISTLPHGLWQISEAGTGVSSIFIYHGEVPQASQVPPPSGFTVHGLPTSPDRPGSTSPFAPSATDLPSMPEPALTSRANMTEHKTSPTQCPAAGEVSNKLPKWPEPVEQFYRSLQDTYGAEPAGPDGILVEVDLVQARLERSSSKSLERELATPDWAERQLAQGGLAEVLLAAKEHRRPRETRVIAVLGKAGQGKSYWAGAVSRAWACGRLPQYDFVFSVPCHCLNRPGDAYGLQDLLFSLGPQPLVAADEVFSHILKRPDRVLLILDGFEELEAQDGFLHSTCGPAPAEPCSLRGLLAGLFQKKLLRGCTLLLTARPRGRLVQSLSKADALFELSGFSMEQAQAYVMRYFESSGMTEHQDRALTLLRDRPLLLSHSHSPTLCRAVCQLSEALLELGEDAKLPSTLTGLYVGLLGRAALDSPPGALAELAKLAWELGRRHQSTLQEDQFPSADVRTWAMAKGLVQHPPRAAESELAFPSFLLQCFLGALWLALSGEIKDKELPQYLALTPRKKRPYDNWLEGVPRFLAGLIFQPPARCLGALLGPSAAASVDRKQKVLARYLKRLQPGTLRARQLLELLHCAHEAEEAGIWQHVVQELPGRLSFLGTRLTPPDAHVLGKALEAAGQDFSLDLRSTGICPSGLGSLVGLSCVTRFRAALSDTVALWESLQQHGETKLLQAAEEKFTIEPFKAKSLKDVEDLGKLVQTQRTRSSSEDTAGELPAVRDLKKLEFALGPVSGPQAFPKLVRILTAFSSLQHLDLDALSENKIGDEGVSQLSATFPQLKSLETLNLSQNNITDLGAYKLAEALPSLAASLLRLSLYNNCICDVGAESLARVLPDMVSLRVMDVQYNKFTAAGAQQLAASLRRCPHVETLAMWTPTIPFSVQEHLQQQDSRISLR.

The interval 94–132 (AYANIAELDQYVFQDSQLEGLSKDIFKHIGPDEVIGESM) is required for acetyltransferase activity. Residues 269–303 (PSGFTVHGLPTSPDRPGSTSPFAPSATDLPSMPEP) form a disordered region. Residues 414-724 (RVIAVLGKAG…CFLGALWLAL (311 aa)) form the NACHT domain. A GTP-binding site is contributed by 420–427 (GKAGQGKS). LRR repeat units follow at residues 985–1008 (SLQH…SQLS), 1016–1037 (SLET…KLAE), 1045–1066 (SLLR…SLAR), and 1073–1093 (SLRV…QQLA).

Interacts with ZXDA and ZXDC. Interacts with PML (isoform PML-2). Interacts with TAF7; interaction inhibits CIITA acetyltransferase activity, thereby repressing transcription. In terms of processing, autophosphorylated, affecting interaction with TAF7.

It localises to the nucleus. The protein resides in the PML body. The enzyme catalyses L-seryl-[protein] + ATP = O-phospho-L-seryl-[protein] + ADP + H(+). It catalyses the reaction L-threonyl-[protein] + ATP = O-phospho-L-threonyl-[protein] + ADP + H(+). In terms of biological role, essential for transcriptional activity of the HLA class II promoter; activation is via the proximal promoter. Does not bind DNA. May act in a coactivator-like fashion through protein-protein interactions by contacting factors binding to the proximal MHC class II promoter, to elements of the transcription machinery, or both PubMed:8402893, PubMed:7749984,. Alternatively it may activate HLA class II transcription by modifying proteins that bind to the MHC class II promoter. Also mediates enhanced MHC class I transcription; the promoter element requirements for CIITA-mediated transcription are distinct from those of constitutive MHC class I transcription, and CIITA can functionally replace TAF1 at these genes. Activates CD74 transcription. Exhibits intrinsic GTP-stimulated acetyltransferase activity. Exhibits serine/threonine protein kinase activity: can phosphorylate the TFIID component TAF7, the RAP74 subunit of the general transcription factor TFIIF, histone H2B at 'Ser-37' and other histones (in vitro). Has antiviral activity against Ebola virus and coronaviruses, including SARS-CoV-2. Induces resistance by up-regulation of the p41 isoform of CD74, which blocks cathepsin-mediated cleavage of viral glycoproteins, thereby preventing viral fusion. Its function is as follows. Exhibits dominant-negative suppression of MHC class II gene expression. The sequence is that of MHC class II transactivator from Homo sapiens (Human).